Reading from the N-terminus, the 123-residue chain is Gamma-synuclein (123 aa).

2 repeat units span residues 20–30 and 31–41. The 4 X 11 AA tandem repeats of [EGSA]-K-T-K-[EQ]-[GQ]-V-X(4) stretch occupies residues 20–67; it reads EKTKQGVTEAAEKTKEGVMYVGTKTKGERGTSVTSVAEKTKEQANAVS. A 3; approximate repeat occupies 42–56; the sequence is TKTKGERGTSVTSVA. Residues 57-67 form repeat 4; it reads EKTKEQANAVS. Phosphoserine is present on residues serine 67 and serine 72. Residues 93-123 are disordered; that stretch reads GVVRKEDLEPPAQDQEAKEQEEGEEAKSGGD. Over residues 107–123 the composition is skewed to basic and acidic residues; it reads QEAKEQEEGEEAKSGGD. A Phosphoserine; by BARK1, CaMK2 and CK2 modification is found at serine 120.

It belongs to the synuclein family. May be a centrosome-associated protein. Interacts with MYOC; affects its secretion and its aggregation. In terms of processing, phosphorylated. Phosphorylation by GRK5 appears to occur on residues distinct from the residue phosphorylated by other kinases. As to expression, specifically expressed in the peripheral nervous system. High expression in motoneurons of the brainstem. Also found in neurons of many other brain regions including the cerebellar cortex, thalamus, hypothalamus and CA1, CA2, CA3 and CA4 regions of the hippocampus.

Its subcellular location is the cytoplasm. The protein resides in the perinuclear region. It is found in the cytoskeleton. The protein localises to the microtubule organizing center. It localises to the centrosome. Its subcellular location is the spindle. In terms of biological role, plays a role in neurofilament network integrity. May be involved in modulating axonal architecture during development and in the adult. In vitro, increases the susceptibility of neurofilament-H to calcium-dependent proteases. May also function in modulating the keratin network in skin. Activates the MAPK and Elk-1 signal transduction pathway. The chain is Gamma-synuclein (Sncg) from Rattus norvegicus (Rat).